Reading from the N-terminus, the 167-residue chain is Small ribosomal subunit protein uS5 (167 aa).

The S5 DRBM domain maps to 19-82; that stretch reads LTEKVLHINR…EAARKNMISC (64 aa).

Belongs to the universal ribosomal protein uS5 family. In terms of assembly, part of the 30S ribosomal subunit. Contacts proteins S4 and S8.

With S4 and S12 plays an important role in translational accuracy. Its function is as follows. Located at the back of the 30S subunit body where it stabilizes the conformation of the head with respect to the body. The protein is Small ribosomal subunit protein uS5 of Protochlamydia amoebophila (strain UWE25).